A 344-amino-acid polypeptide reads, in one-letter code: Tetraacyldisaccharide 4'-kinase (344 aa).

Residue 65-72 (HAGGTGKT) coordinates ATP.

The protein belongs to the LpxK family.

The enzyme catalyses a lipid A disaccharide + ATP = a lipid IVA + ADP + H(+). It functions in the pathway glycolipid biosynthesis; lipid IV(A) biosynthesis; lipid IV(A) from (3R)-3-hydroxytetradecanoyl-[acyl-carrier-protein] and UDP-N-acetyl-alpha-D-glucosamine: step 6/6. Its function is as follows. Transfers the gamma-phosphate of ATP to the 4'-position of a tetraacyldisaccharide 1-phosphate intermediate (termed DS-1-P) to form tetraacyldisaccharide 1,4'-bis-phosphate (lipid IVA). This Neisseria meningitidis serogroup C / serotype 2a (strain ATCC 700532 / DSM 15464 / FAM18) protein is Tetraacyldisaccharide 4'-kinase.